A 454-amino-acid chain; its full sequence is uncharacterized protein (454 aa).

Residues 1–18 (MRRFTLFVFFLSISIAYA) form the signal peptide.

This is an uncharacterized protein from Caenorhabditis elegans.